The primary structure comprises 137 residues: Large ribosomal subunit protein uL16 (137 aa).

The protein belongs to the universal ribosomal protein uL16 family. In terms of assembly, part of the 50S ribosomal subunit.

Binds 23S rRNA and is also seen to make contacts with the A and possibly P site tRNAs. In Bartonella quintana (strain Toulouse) (Rochalimaea quintana), this protein is Large ribosomal subunit protein uL16.